The following is a 487-amino-acid chain: Glutamyl-tRNA(Gln) amidotransferase subunit A (487 aa).

Catalysis depends on charge relay system residues Lys80 and Ser155. Catalysis depends on Ser179, which acts as the Acyl-ester intermediate.

Belongs to the amidase family. GatA subfamily. Heterotrimer of A, B and C subunits.

It carries out the reaction L-glutamyl-tRNA(Gln) + L-glutamine + ATP + H2O = L-glutaminyl-tRNA(Gln) + L-glutamate + ADP + phosphate + H(+). Its function is as follows. Allows the formation of correctly charged Gln-tRNA(Gln) through the transamidation of misacylated Glu-tRNA(Gln) in organisms which lack glutaminyl-tRNA synthetase. The reaction takes place in the presence of glutamine and ATP through an activated gamma-phospho-Glu-tRNA(Gln). This chain is Glutamyl-tRNA(Gln) amidotransferase subunit A, found in Leptospira interrogans serogroup Icterohaemorrhagiae serovar copenhageni (strain Fiocruz L1-130).